The following is a 2364-amino-acid chain: Spectrin beta chain, non-erythrocytic 1 (2364 aa).

Residue T2 is modified to N-acetylthreonine. The interval 2-275 (TTTVATDYDN…IITYVVTYYH (274 aa)) is actin-binding. A phosphoserine mark is found at I14 and S36. Calponin-homology (CH) domains are found at residues 54 to 158 (AVQK…LRFQ) and 173 to 278 (KSAK…HYFS). Residue K90 is modified to N6-acetyllysine. S228 is subject to Phosphoserine. Spectrin repeat units follow at residues 303 to 411 (MIEK…LALR), 423 to 525 (LARR…QRLE), 530 to 636 (LQKI…RLEE), 639 to 742 (RLWK…RLEE), 745 to 847 (LLHQ…ALQD), 850 to 952 (ALYK…DALL), 957 to 1060 (IQNY…SLGE), 1063 to 1166 (KLQQ…NLLS), 1170 to 1258 (AYQQ…DRHR), 1276 to 1376 (DLQK…AQRL), 1381 to 1482 (KAEL…HNLL), 1486 to 1590 (EIHQ…RLEE), 1592 to 1696 (HRAQ…KLDE), 1698 to 1801 (HRLF…TQIL), and 1805 to 1907 (YELH…RVRL). Phosphoserine occurs at positions 817, 825, 903, 1057, 1076, 1079, and 1237. 3 positions are modified to phosphoserine: S1388, S1447, and S1557. Residues 1563-2093 (IRQRLADLKQ…LLEVRRQQEE (531 aa)) are interaction with ANK2. The residue at position 1805 (Y1805) is a Phosphotyrosine. K1815, K1913, and K1989 each carry N6-acetyllysine. Spectrin repeat units lie at residues 1914–2014 (FRFF…EWLR) and 2018–2097 (EVHQ…EERK). A disordered region spans residues 2089–2196 (RQQEEEERKR…TLPARTQETP (108 aa)). S2102, S2128, and S2138 each carry phosphoserine. Residues 2115-2131 (SQQQWDTSKGEQVSQNG) are compositionally biased toward polar residues. Residues 2145–2166 (VDTSEMVNGATEQRTSSKESSP) show a composition bias toward polar residues. T2147 is subject to Phosphothreonine. S2148 bears the Phosphoserine mark. The segment at 2149–2177 (EMVNGATEQRTSSKESSPIPSPTSDRKAK) is mediates interaction with CAMSAP1. Position 2159 is a phosphothreonine (T2159). Phosphoserine is present on residues S2160, S2161, S2164, S2165, and S2169. T2171 carries the post-translational modification Phosphothreonine. Residues S2172 and S2184 each carry the phosphoserine modification. Polar residues predominate over residues 2184–2196 (SAATLPARTQETP). 2 positions are modified to phosphothreonine: T2187 and T2195. Positions 2197-2307 (SAQMEGFLNR…WIQAISSAIS (111 aa)) constitute a PH domain. Residues 2309–2364 (DKHEVSASTQSTPASSRAQTLPTSVVTITSESSPGKREKDKEKDKEKRFSLFGKKK) form a disordered region. Phosphoserine occurs at positions 2314 and 2319. Residues 2314 to 2341 (SASTQSTPASSRAQTLPTSVVTITSESS) are compositionally biased toward polar residues. T2320 bears the Phosphothreonine mark. O-linked (GlcNAc) serine glycosylation occurs at S2324. T2328 is subject to Phosphothreonine. Phosphoserine occurs at positions 2340 and 2341. Residues 2342–2357 (PGKREKDKEKDKEKRF) are compositionally biased toward basic and acidic residues.

It belongs to the spectrin family. In terms of assembly, interacts with CAMSAP1. Interacts with ANK2. Interacts with CPNE4 (via VWFA domain). Like erythrocyte spectrin, the spectrin-like proteins are capable to form dimers which can further associate to tetramers. Can form heterodimers with SPTAN1. Isoform Short cannot bind to the axonal protein fodaxin. As to expression, isoform 2 is present in brain, lung and kidney (at protein level).

The protein resides in the cytoplasm. It is found in the cytoskeleton. Its subcellular location is the myofibril. The protein localises to the sarcomere. It localises to the m line. The protein resides in the cytosol. It is found in the cell membrane. Functionally, fodrin, which seems to be involved in secretion, interacts with calmodulin in a calcium-dependent manner and is thus candidate for the calcium-dependent movement of the cytoskeleton at the membrane. Plays a critical role in central nervous system development and function. In Homo sapiens (Human), this protein is Spectrin beta chain, non-erythrocytic 1 (SPTBN1).